Here is a 508-residue protein sequence, read N- to C-terminus: UTP--glucose-1-phosphate uridylyltransferase (508 aa).

The residue at position 13 (S13) is a Phosphoserine. UTP-binding positions include 113 to 116 (LNGG), K127, Q190, and G222. Substrate is bound at residue 115 to 116 (GG). K127 serves as a coordination point for Mg(2+). Substrate-binding positions include H223 and 251–253 (NID). The UTP site is built by D253 and K396. D253 serves as a coordination point for Mg(2+). The active site involves K396. T426 is modified (phosphothreonine). S434 carries the phosphoserine modification. N6-acetyllysine is present on K438. S448 and S461 each carry phosphoserine. Positions 457–508 (HLTVSGDVTFGKNVSLKGTVIIIANHGDRIDIPPGAVLENKIVSGNLRILDH) are oligomerization. The segment at 502-503 (NL) is critical for end-to-end subunit interaction.

The protein belongs to the UDPGP type 1 family. As to quaternary structure, homooctamer.

The protein localises to the cytoplasm. The enzyme catalyses alpha-D-glucose 1-phosphate + UTP + H(+) = UDP-alpha-D-glucose + diphosphate. Its pathway is glycan biosynthesis; glycogen biosynthesis. Functionally, UTP--glucose-1-phosphate uridylyltransferase catalyzing the conversion of glucose-1-phosphate into UDP-glucose, a crucial precursor for the production of glycogen. The polypeptide is UTP--glucose-1-phosphate uridylyltransferase (Ugp2) (Mus musculus (Mouse)).